The sequence spans 551 residues: Xylulose kinase (551 aa).

Substrate-binding residues include histidine 114, arginine 185, aspartate 295, and asparagine 296. ATP contacts are provided by residues tryptophan 370, 456-457 (GA), and asparagine 460.

This sequence belongs to the FGGY kinase family. As to quaternary structure, monomer.

It carries out the reaction D-xylulose + ATP = D-xylulose 5-phosphate + ADP + H(+). Its function is as follows. Phosphorylates D-xylulose to produce D-xylulose 5-phosphate, a molecule that may play an important role in the regulation of glucose metabolism and lipogenesis. The polypeptide is Xylulose kinase (Xylb) (Mus musculus (Mouse)).